Here is a 116-residue protein sequence, read N- to C-terminus: Ribosome-binding factor A (116 aa).

This sequence belongs to the RbfA family. Monomer. Binds 30S ribosomal subunits, but not 50S ribosomal subunits or 70S ribosomes.

The protein localises to the cytoplasm. In terms of biological role, one of several proteins that assist in the late maturation steps of the functional core of the 30S ribosomal subunit. Associates with free 30S ribosomal subunits (but not with 30S subunits that are part of 70S ribosomes or polysomes). Required for efficient processing of 16S rRNA. May interact with the 5'-terminal helix region of 16S rRNA. The polypeptide is Ribosome-binding factor A (Halalkalibacterium halodurans (strain ATCC BAA-125 / DSM 18197 / FERM 7344 / JCM 9153 / C-125) (Bacillus halodurans)).